We begin with the raw amino-acid sequence, 379 residues long: Protein RecA (379 aa).

The segment at 1–23 (MSVDVKSAQSSKSDSLQVEPRPG) is disordered. Residues 7 to 16 (SAQSSKSDSL) show a composition bias toward polar residues. 84–91 (GPESSGKT) provides a ligand contact to ATP.

It belongs to the RecA family.

The protein localises to the cytoplasm. Functionally, can catalyze the hydrolysis of ATP in the presence of single-stranded DNA, the ATP-dependent uptake of single-stranded DNA by duplex DNA, and the ATP-dependent hybridization of homologous single-stranded DNAs. It interacts with LexA causing its activation and leading to its autocatalytic cleavage. In Prochlorococcus marinus (strain MIT 9313), this protein is Protein RecA.